The primary structure comprises 320 residues: Methylenetetrahydrofolate dehydrogenase [NAD(+)] (320 aa).

Cysteine 150 is an active-site residue. Residues 185–186 (RS), 208–209 (DV), and 274–276 (FAC) contribute to the NAD(+) site.

Belongs to the tetrahydrofolate dehydrogenase/cyclohydrolase family. In terms of assembly, homodimer. Post-translationally, the N-terminus is blocked.

The protein resides in the cytoplasm. The protein localises to the nucleus. It catalyses the reaction (6R)-5,10-methylene-5,6,7,8-tetrahydrofolate + NAD(+) = (6R)-5,10-methenyltetrahydrofolate + NADH. Functionally, catalyzes oxidation of cytoplasmic one-carbon units for purine biosynthesis. This is Methylenetetrahydrofolate dehydrogenase [NAD(+)] (MTD1) from Saccharomyces cerevisiae (strain ATCC 204508 / S288c) (Baker's yeast).